The sequence spans 92 residues: Small ribosomal subunit protein uS19 (92 aa).

This sequence belongs to the universal ribosomal protein uS19 family.

Protein S19 forms a complex with S13 that binds strongly to the 16S ribosomal RNA. The sequence is that of Small ribosomal subunit protein uS19 from Anoxybacillus flavithermus (strain DSM 21510 / WK1).